Reading from the N-terminus, the 389-residue chain is Homoserine O-acetyltransferase (389 aa).

The interval 1–21 is disordered; it reads MAALRAGKTNNEADQPSSPVL. Polar residues predominate over residues 8 to 18; that stretch reads KTNNEADQPSS. The AB hydrolase-1 domain maps to 56 to 366; the sequence is NAILVCHALT…DRGHDAFLLD (311 aa). Ser161 serves as the catalytic Nucleophile. Arg231 serves as a coordination point for substrate. Catalysis depends on residues Asp327 and His360. Residue Asp361 participates in substrate binding.

Belongs to the AB hydrolase superfamily. MetX family. As to quaternary structure, homodimer.

It is found in the cytoplasm. It carries out the reaction L-homoserine + acetyl-CoA = O-acetyl-L-homoserine + CoA. The protein operates within amino-acid biosynthesis; L-methionine biosynthesis via de novo pathway; O-acetyl-L-homoserine from L-homoserine: step 1/1. Transfers an acetyl group from acetyl-CoA to L-homoserine, forming acetyl-L-homoserine. In Mesorhizobium japonicum (strain LMG 29417 / CECT 9101 / MAFF 303099) (Mesorhizobium loti (strain MAFF 303099)), this protein is Homoserine O-acetyltransferase.